The chain runs to 231 residues: eRF1 methyltransferase catalytic subunit mtq2 (231 aa).

S-adenosyl-L-methionine-binding positions include 54-58 (GCGSG), aspartate 80, and asparagine 130. 130 to 133 (NPPY) provides a ligand contact to substrate.

Belongs to the eukaryotic/archaeal PrmC-related family. Heterodimer of mtq2-trm112. mtq2 is the catalytic subunit carrying the catalytic and the S-adenosyl L-methionine binding sites.

The protein localises to the cytoplasm. Its subcellular location is the nucleus. It catalyses the reaction L-glutaminyl-[peptide chain release factor] + S-adenosyl-L-methionine = N(5)-methyl-L-glutaminyl-[peptide chain release factor] + S-adenosyl-L-homocysteine + H(+). Functionally, methylates eRF1 on 'Gln-182' using S-adenosyl L-methionine as methyl donor. eRF1 needs to be complexed to eRF3 in its GTP-bound form to be efficiently methylated. The protein is eRF1 methyltransferase catalytic subunit mtq2 (mtq2) of Schizosaccharomyces pombe (strain 972 / ATCC 24843) (Fission yeast).